The chain runs to 206 residues: N-(5'-phosphoribosyl)anthranilate isomerase (206 aa).

Belongs to the TrpF family.

The catalysed reaction is N-(5-phospho-beta-D-ribosyl)anthranilate = 1-(2-carboxyphenylamino)-1-deoxy-D-ribulose 5-phosphate. The protein operates within amino-acid biosynthesis; L-tryptophan biosynthesis; L-tryptophan from chorismate: step 3/5. This Azotobacter vinelandii (strain DJ / ATCC BAA-1303) protein is N-(5'-phosphoribosyl)anthranilate isomerase.